A 427-amino-acid chain; its full sequence is UPF0229 protein YeaH (427 aa).

The segment covering 79–90 has biased composition (basic and acidic residues); the sequence is NDHFVQNDRIER. Residues 79–110 are disordered; it reads NDHFVQNDRIERPQGGGGGSGSGQGQASQDGE. Residues 92–102 are compositionally biased toward gly residues; sequence QGGGGGSGSGQ.

It belongs to the UPF0229 family.

In Escherichia coli O139:H28 (strain E24377A / ETEC), this protein is UPF0229 protein YeaH.